Consider the following 552-residue polypeptide: Probable bifunctional methylthioribose-1-phosphate isomerase/methylthioribulose-1-phosphate dehydratase (552 aa).

Residues 1–333 (MRPIDDSSLT…VVTEHGVVHG (333 aa)) form a methylthioribose-1-phosphate isomerase activity region. Residues 49–51 (RGA), R91, and Q195 each bind substrate. D236 acts as the Proton donor in catalysis. Residue 246–247 (NK) coordinates substrate. The segment at 334–535 (TVAAEPGARI…AVCELVLRTG (202 aa)) is methylthioribulose-1-phosphate dehydratase activity. 2 residues coordinate Zn(2+): H427 and H429.

The protein in the N-terminal section; belongs to the eIF-2B alpha/beta/delta subunits family. MtnA subfamily. It in the C-terminal section; belongs to the aldolase class II family. MtnB subfamily. Requires Zn(2+) as cofactor.

It catalyses the reaction 5-(methylsulfanyl)-alpha-D-ribose 1-phosphate = 5-(methylsulfanyl)-D-ribulose 1-phosphate. It carries out the reaction 5-(methylsulfanyl)-D-ribulose 1-phosphate = 5-methylsulfanyl-2,3-dioxopentyl phosphate + H2O. It functions in the pathway amino-acid biosynthesis; L-methionine biosynthesis via salvage pathway; L-methionine from S-methyl-5-thio-alpha-D-ribose 1-phosphate: step 1/6. The protein operates within amino-acid biosynthesis; L-methionine biosynthesis via salvage pathway; L-methionine from S-methyl-5-thio-alpha-D-ribose 1-phosphate: step 2/6. Its function is as follows. Bifunctional protein that catalyzes the interconversion of methylthioribose-1-phosphate (MTR-1-P) into methylthioribulose-1-phosphate (MTRu-1-P), and the dehydration of methylthioribulose-1-phosphate (MTRu-1-P) into 2,3-diketo-5-methylthiopentyl-1-phosphate (DK-MTP-1-P). The chain is Probable bifunctional methylthioribose-1-phosphate isomerase/methylthioribulose-1-phosphate dehydratase (mtnAB) from Nocardia farcinica (strain IFM 10152).